The primary structure comprises 455 residues: Bifunctional protein GlmU (455 aa).

The segment at 1–226 is pyrophosphorylase; the sequence is MSLDIVILAA…AMEVQGANDR (226 aa). UDP-N-acetyl-alpha-D-glucosamine is bound by residues 8 to 11, Lys-22, Gln-73, 78 to 79, 99 to 101, Gly-136, Glu-151, Asn-166, and Asn-224; these read LAAG, GT, and YGD. Asp-101 provides a ligand contact to Mg(2+). Asn-224 is a binding site for Mg(2+). The interval 227-247 is linker; that stretch reads RQLSELERHYQLREGRRLMAQ. Positions 248-455 are N-acetyltransferase; it reads GVTLRDPARF…WKRPEKIKKS (208 aa). UDP-N-acetyl-alpha-D-glucosamine-binding residues include Arg-330 and Lys-348. His-360 functions as the Proton acceptor in the catalytic mechanism. The UDP-N-acetyl-alpha-D-glucosamine site is built by Tyr-363 and Asn-374. Acetyl-CoA is bound by residues Ala-377, 383–384, Ser-402, Ala-420, and Arg-437; that span reads NY.

This sequence in the N-terminal section; belongs to the N-acetylglucosamine-1-phosphate uridyltransferase family. The protein in the C-terminal section; belongs to the transferase hexapeptide repeat family. As to quaternary structure, homotrimer. It depends on Mg(2+) as a cofactor.

Its subcellular location is the cytoplasm. The enzyme catalyses alpha-D-glucosamine 1-phosphate + acetyl-CoA = N-acetyl-alpha-D-glucosamine 1-phosphate + CoA + H(+). It catalyses the reaction N-acetyl-alpha-D-glucosamine 1-phosphate + UTP + H(+) = UDP-N-acetyl-alpha-D-glucosamine + diphosphate. It functions in the pathway nucleotide-sugar biosynthesis; UDP-N-acetyl-alpha-D-glucosamine biosynthesis; N-acetyl-alpha-D-glucosamine 1-phosphate from alpha-D-glucosamine 6-phosphate (route II): step 2/2. Its pathway is nucleotide-sugar biosynthesis; UDP-N-acetyl-alpha-D-glucosamine biosynthesis; UDP-N-acetyl-alpha-D-glucosamine from N-acetyl-alpha-D-glucosamine 1-phosphate: step 1/1. It participates in bacterial outer membrane biogenesis; LPS lipid A biosynthesis. In terms of biological role, catalyzes the last two sequential reactions in the de novo biosynthetic pathway for UDP-N-acetylglucosamine (UDP-GlcNAc). The C-terminal domain catalyzes the transfer of acetyl group from acetyl coenzyme A to glucosamine-1-phosphate (GlcN-1-P) to produce N-acetylglucosamine-1-phosphate (GlcNAc-1-P), which is converted into UDP-GlcNAc by the transfer of uridine 5-monophosphate (from uridine 5-triphosphate), a reaction catalyzed by the N-terminal domain. In Pseudomonas putida (strain ATCC 700007 / DSM 6899 / JCM 31910 / BCRC 17059 / LMG 24140 / F1), this protein is Bifunctional protein GlmU.